A 334-amino-acid polypeptide reads, in one-letter code: Transcription factor MYB92 (334 aa).

HTH myb-type domains are found at residues 9–61 (DSGL…TNYL) and 62–116 (RPDI…KKKL). 2 DNA-binding regions (H-T-H motif) span residues 37 to 61 (WRAL…TNYL) and 89 to 112 (WSTI…NTHL).

Interacts with FBX5. As to expression, highly expressed in roots and at lower levels in stems, flowers and siliques.

The protein resides in the nucleus. Probable transcription factor. This is Transcription factor MYB92 from Arabidopsis thaliana (Mouse-ear cress).